The chain runs to 1770 residues: Transposon Ty2-F Gag-Pol polyprotein (1770 aa).

Polar residues-rich tracts occupy residues 1–11 (MESQQLHQNPH), 19–39 (ASVT…SASN), and 49–60 (KVNSQQETTPGT). Disordered regions lie at residues 1 to 86 (MESQ…GQYQ) and 359 to 453 (QHSE…LPDH). Residues 295-397 (ENNINVSDRL…SSKPRAAKAH (103 aa)) form an RNA-binding region. Positions 369–381 (TSPNTTNTKVTTR) are enriched in low complexity. Composition is skewed to polar residues over residues 399-408 (IATSSKFSRV) and 415-435 (ESTV…GQQQ). Aspartate 457 (for protease activity; shared with dimeric partner) is an active-site residue. The integrase-type zinc finger-like stretch occupies residues 579–636 (NVNKSKSVNKYPYPLIHRMLGHANFRSIQKSLKKNAVTYLKESDIEWSNASTYQCPDC). Positions 656–831 (ESYEPFQYLH…AGLDITTILP (176 aa)) constitute an Integrase catalytic domain. Positions 667 and 732 each coordinate Mg(2+). Disordered stretches follow at residues 1004–1034 (MGGT…STNE), 1059–1135 (TEEP…KSSK), 1146–1165 (LPLP…VSKD), and 1170–1205 (HSRQ…TEIE). 2 stretches are compositionally biased toward polar residues: residues 1009-1034 (ESDT…STNE) and 1065-1082 (QRNS…STPS). Positions 1151 to 1165 (LTHKSPTDTSDVSKD) are enriched in basic and acidic residues. The short motif at 1193 to 1227 (KKRSLEDNETEIEVSRDTWNNKNMRSLEPPRSKKR) is the Bipartite nuclear localization signal element. One can recognise a Reverse transcriptase Ty1/copia-type domain in the interval 1353–1491 (NDYYITQLDI…DILGLEIKYQ (139 aa)). Mg(2+) contacts are provided by aspartate 1361, aspartate 1442, aspartate 1443, aspartate 1625, glutamate 1667, and aspartate 1700. Positions 1625–1767 (DASYGNQPYY…IKTFKLLTNK (143 aa)) constitute an RNase H Ty1/copia-type domain.

As to quaternary structure, the capsid protein forms a homotrimer, from which the VLPs are assembled. The protease is a homodimer, whose active site consists of two apposed aspartic acid residues. Initially, virus-like particles (VLPs) are composed of the structural unprocessed proteins Gag and Gag-Pol, and also contain the host initiator methionine tRNA (tRNA(i)-Met) which serves as a primer for minus-strand DNA synthesis, and a dimer of genomic Ty RNA. Processing of the polyproteins occurs within the particle and proceeds by an ordered pathway, called maturation. First, the protease (PR) is released by autocatalytic cleavage of the Gag-Pol polyprotein, and this cleavage is a prerequisite for subsequent processing at the remaining sites to release the mature structural and catalytic proteins. Maturation takes place prior to the RT reaction and is required to produce transposition-competent VLPs.

The protein localises to the cytoplasm. Its subcellular location is the nucleus. It catalyses the reaction DNA(n) + a 2'-deoxyribonucleoside 5'-triphosphate = DNA(n+1) + diphosphate. The catalysed reaction is Endonucleolytic cleavage to 5'-phosphomonoester.. Functionally, capsid protein (CA) is the structural component of the virus-like particle (VLP), forming the shell that encapsulates the retrotransposons dimeric RNA genome. The particles are assembled from trimer-clustered units and there are holes in the capsid shells that allow for the diffusion of macromolecules. CA also has nucleocapsid-like chaperone activity, promoting primer tRNA(i)-Met annealing to the multipartite primer-binding site (PBS), dimerization of Ty2 RNA and initiation of reverse transcription. Its function is as follows. The aspartyl protease (PR) mediates the proteolytic cleavages of the Gag and Gag-Pol polyproteins after assembly of the VLP. Reverse transcriptase/ribonuclease H (RT) is a multifunctional enzyme that catalyzes the conversion of the retro-elements RNA genome into dsDNA within the VLP. The enzyme displays a DNA polymerase activity that can copy either DNA or RNA templates, and a ribonuclease H (RNase H) activity that cleaves the RNA strand of RNA-DNA heteroduplexes during plus-strand synthesis and hydrolyzes RNA primers. The conversion leads to a linear dsDNA copy of the retrotransposon that includes long terminal repeats (LTRs) at both ends. In terms of biological role, integrase (IN) targets the VLP to the nucleus, where a subparticle preintegration complex (PIC) containing at least integrase and the newly synthesized dsDNA copy of the retrotransposon must transit the nuclear membrane. Once in the nucleus, integrase performs the integration of the dsDNA into the host genome. This is Transposon Ty2-F Gag-Pol polyprotein (TY2B-F) from Saccharomyces cerevisiae (strain ATCC 204508 / S288c) (Baker's yeast).